The following is a 462-amino-acid chain: Elongation factor 1-alpha 1 (462 aa).

The residue at position 2 (Gly2) is a N,N,N-trimethylglycine. A tr-type G domain is found at 5–242 (KTHINIVVIG…DCILPPTRPT (238 aa)). The segment at 14–21 (GHVDSGKS) is G1. 14–21 (GHVDSGKS) contacts GTP. At Lys36 the chain carries N6,N6,N6-trimethyllysine; alternate. Lys36 bears the N6,N6-dimethyllysine; alternate mark. Position 36 is an N6-methyllysine; alternate (Lys36). Lys55 carries the N6,N6-dimethyllysine modification. The G2 stretch occupies residues 70–74 (GITID). At Lys79 the chain carries N6,N6,N6-trimethyllysine; by EEF1AKMT1. Residues 91–94 (DAPG) are G3. GTP is bound at residue 153 to 156 (NKMD). Residues 153–156 (NKMD) form a G4 region. N6,N6,N6-trimethyllysine; alternate; by EEF1AKMT3 is present on Lys165. Lys165 bears the N6,N6-dimethyllysine; alternate; by EEF1AKMT3 mark. N6-acetyllysine; alternate is present on Lys165. Lys165 is modified (N6-methyllysine; alternate; by EEF1AKMT3). Lys172 bears the N6-acetyllysine mark. 194–196 (SGW) is a binding site for GTP. The segment at 194-196 (SGW) is G5. Lys273 is modified (N6-acetyllysine). Phosphoserine; by TGFBR1 is present on Ser300. Glu301 carries the post-translational modification 5-glutamyl glycerylphosphorylethanolamine. At Lys318 the chain carries N6,N6,N6-trimethyllysine; by EEF1AKMT2. Glu374 carries the 5-glutamyl glycerylphosphorylethanolamine modification. Lys385 participates in a covalent cross-link: Glycyl lysine isopeptide (Lys-Gly) (interchain with G-Cter in ubiquitin). The residue at position 392 (Lys392) is an N6-acetyllysine; alternate. Position 392 is an N6-succinyllysine; alternate (Lys392). Thr432 is subject to Phosphothreonine; by PASK. The residue at position 439 (Lys439) is an N6-acetyllysine.

This sequence belongs to the TRAFAC class translation factor GTPase superfamily. Classic translation factor GTPase family. EF-Tu/EF-1A subfamily. In terms of assembly, found in a nuclear export complex with XPO5, EEF1A1, Ran and aminoacylated tRNA. Interacts with PARP1 and TXK. Interacts with KARS1. May interact with ERGIC2. Interacts with IFIT1 (via TPR repeats 4-7). Interacts with DLC1, facilitating distribution to the membrane periphery and ruffles upon growth factor stimulation. Interacts with ZPR1; the interaction occurs in a epidermal growth factor (EGF)-dependent manner. Interacts with PPP1R16B. Interacts with SPHK1 and SPHK2; both interactions increase SPHK1 and SPHK2 kinase activity. Interacts with guanyl-nucleotide exchange factor EEF1B2. Interacts (via middle-region) with HTATIP2 (via N-terminus); the interaction is direct and competes with EEF1A1 binding to guanyl-nucleotide exchange factor EEF1B2, thereby inhibiting GDP for GTP exchange and reactivation of EEF1A1. Interacts with tRNA. ISGylated. In terms of processing, phosphorylated by TXK. Phosphorylation by PASK increases translation efficiency. Phosphorylated by ROCK2. Phosphorylation by TGFBR1 inhibits translation elongation. Post-translationally, trimethylated at Lys-79 by EEF1AKMT1. Methylated at Lys-165 by EEF1AKMT3, methylation by EEF1AKMT3 is dynamic as well as inducible by stress conditions, such as ER-stress, and plays a regulatory role on mRNA translation. Trimethylated at Lys-318 by EEF1AKMT2. Mono-, di-, and trimethylated at Lys-36 by EEF1AKMT4; trimethylated form is predominant. Methylation by EEF1AKMT4 contributes to the fine-tuning of translation rates for a subset of tRNAs. Trimethylated at Gly-2 by METTL13. Mono- and dimethylated at Lys-55 by METTL13; dimethylated form is predominant. Ubiquitinated at Lys-385 by RNF14 in response to ribosome collisions (ribosome stalling), leading to its degradation by the proteasome and rescue of stalled ribosomes.

The protein localises to the cytoplasm. It localises to the nucleus. It is found in the nucleolus. The protein resides in the cell membrane. The catalysed reaction is GTP + H2O = GDP + phosphate + H(+). Translation elongation factor that catalyzes the GTP-dependent binding of aminoacyl-tRNA (aa-tRNA) to the A-site of ribosomes during the elongation phase of protein synthesis. Base pairing between the mRNA codon and the aa-tRNA anticodon promotes GTP hydrolysis, releasing the aa-tRNA from EEF1A1 and allowing its accommodation into the ribosome. The growing protein chain is subsequently transferred from the P-site peptidyl tRNA to the A-site aa-tRNA, extending it by one amino acid through ribosome-catalyzed peptide bond formation. Also plays a role in the positive regulation of IFNG transcription in T-helper 1 cells as part of an IFNG promoter-binding complex with TXK and PARP1. Also plays a role in cytoskeleton organization by promoting actin bundling. In Equus caballus (Horse), this protein is Elongation factor 1-alpha 1 (EEF1A1).